Consider the following 138-residue polypeptide: MRTLWIVAMCLIGVEGNLFQFARLIDAKQEAFSFFKYISYGCYCGWGGQGTPKDATDRCCFVHDCCYARVKGCNPKLVEYSYGYRTGKIVCENYNRCKRAVCECDRVAAICLGQNVNTYNKGYMFLSSYYCRQKSEQC.

Residues 1 to 16 (MRTLWIVAMCLIGVEG) form the signal peptide. Disulfide bonds link cysteine 42–cysteine 131, cysteine 44–cysteine 60, cysteine 59–cysteine 111, cysteine 65–cysteine 138, cysteine 66–cysteine 104, cysteine 73–cysteine 97, and cysteine 91–cysteine 102. Residues tyrosine 43, glycine 45, and glycine 47 each contribute to the Ca(2+) site. Residue histidine 63 is part of the active site. Aspartate 64 contributes to the Ca(2+) binding site. Aspartate 105 is a catalytic residue.

Requires Ca(2+) as cofactor. Expressed by the venom gland.

Its subcellular location is the secreted. It catalyses the reaction a 1,2-diacyl-sn-glycero-3-phosphocholine + H2O = a 1-acyl-sn-glycero-3-phosphocholine + a fatty acid + H(+). Exhibits high hydrolytic activities and shows strong preference for the anionic micelles (dPPC with deoxycholate) to the zwitterionic micelles (dPPC with Triton X-100). PLA2 catalyzes the calcium-dependent hydrolysis of the 2-acyl groups in 3-sn-phosphoglycerides. In Daboia siamensis (Eastern Russel's viper), this protein is Basic phospholipase A2 DsM-b1/DsM-b1'.